A 259-amino-acid polypeptide reads, in one-letter code: MLPLCLVAALLLSASGPRPSLGDEAIHCPPCSEEKLARCRPPVGCEELVREPGCGCCATCALGKGMPCGVYTPRCGSGLRCYPPRGVEKPLHTLMHGQGLCMELAEIEAIQESLQPSDKDEGDHPNNSFSPCSPQDRRCLQKHLAKIRDRSTSGGKMKVIGAPREEARPVPQGSCQSELHRALERLAASQRRTHEDLYIIPIPNCDRNGNFHPKQCHPALDGQRGKCWCVDRKTGVKLPGGLEPKGELDCHQLADSFRE.

The signal sequence occupies residues 1-22 (MLPLCLVAALLLSASGPRPSLG). The 81-residue stretch at 24–104 (EAIHCPPCSE…MHGQGLCMEL (81 aa)) folds into the IGFBP N-terminal domain. 6 cysteine pairs are disulfide-bonded: cysteine 28–cysteine 54, cysteine 31–cysteine 56, cysteine 39–cysteine 57, cysteine 45–cysteine 60, cysteine 68–cysteine 81, and cysteine 75–cysteine 101. The tract at residues 115 to 136 (QPSDKDEGDHPNNSFSPCSPQD) is disordered. Residue asparagine 126 is glycosylated (N-linked (GlcNAc...) asparagine). 4 cysteine pairs are disulfide-bonded: cysteine 132–cysteine 139, cysteine 175–cysteine 205, cysteine 216–cysteine 227, and cysteine 229–cysteine 250. In terms of domain architecture, Thyroglobulin type-1 spans 172–250 (QGSCQSELHR…GLEPKGELDC (79 aa)). Serine 256 is subject to Phosphoserine.

In terms of assembly, binds IGF2 more than IGF1.

The protein resides in the secreted. Functionally, IGF-binding proteins prolong the half-life of the IGFs and have been shown to either inhibit or stimulate the growth promoting effects of the IGFs on cell culture. They alter the interaction of IGFs with their cell surface receptors. The sequence is that of Insulin-like growth factor-binding protein 4 (IGFBP4) from Sus scrofa (Pig).